The sequence spans 854 residues: Espin (854 aa).

ANK repeat units lie at residues 1–31, 35–64, 69–99, 103–133, 137–167, 171–201, 205–235, 239–268, and 271–300; these read MALE…GPSL, LDAL…LPAA, NGAT…RVQD, SGAT…DPTA, MGAL…GVNA, NGAT…DPHA, DGMT…SLSE, DGAT…EISA, and WGGT…ELDV. Phosphoserine is present on residues S338 and S342. Over residues 338-349 the composition is skewed to basic and acidic residues; it reads SRDPSAELEAKQ. Disordered stretches follow at residues 338 to 400, 415 to 474, 487 to 713, 765 to 788, and 800 to 832; these read SRDP…CGLS, NPEL…MQTK, KELS…AGFQ, KMQE…SMPA, and EERE…TLGY. Positions 352–377 are enriched in polar residues; it reads SGMSSPNTTVSVQPLNFDLSSPTSTL. Positions 378-389 are enriched in low complexity; the sequence is SNYDSCSSSHSS. Residues 428 to 463 are compositionally biased toward pro residues; sequence PTPPPPPPSFPPPPPPPGTQLPPPPPGYPAPKPPVG. Residues 487 to 505 are compositionally biased toward basic and acidic residues; sequence KELSSCDGHDGLRRQDSSR. S515 bears the Phosphoserine mark. The segment covering 595-620 has biased composition (pro residues); that stretch reads LPPPPPPPPPPLPEAASSPPPAPPLP. Over residues 633–642 the composition is skewed to low complexity; sequence SSSSTGSTKS. Polar residues-rich tracts occupy residues 643–652 and 667–678; these read FNMMSPTGDN and PTPQSKGLTTVF. S647 carries the post-translational modification Phosphoserine. One can recognise a WH2 domain in the interval 651–668; it reads DNSELLAEIKAGKSLKPT. Phosphoserine occurs at positions 690 and 696. A compositionally biased stretch (low complexity) spans 692–703; the sequence is LPSVSPALSPVR. Residues 756 to 830 are a coiled coil; it reads QVMVRKMQLK…KEQSEKLRTL (75 aa).

In terms of assembly, monomer. Binds F-actin in a Ca(2+)-resistant fashion. Interacts (via N-terminus) with BAIAP2 (via SH3-domain). Interacts with PFN2. Interacts with MYO3A (via C-terminus). Interacts with MYO3B (via C-terminus).

It is found in the cytoplasm. The protein resides in the cytoskeleton. It localises to the cell projection. Its subcellular location is the stereocilium. The protein localises to the microvillus. In terms of biological role, multifunctional actin-bundling protein. Plays a major role in regulating the organization, dimension, dynamics and signaling capacities of the actin filament-rich microvilli in the mechanosensory and chemosensory cells. Required for the assembly and stabilization of the stereociliary parallel actin bundles. Plays a crucial role in the formation and maintenance of inner ear hair cell stereocilia. Involved in the elongation of actin in stereocilia. In extrastriolar hair cells, required for targeting MYO3B to stereocilia tips, and for regulation of stereocilia diameter and staircase formation. The protein is Espin (ESPN) of Homo sapiens (Human).